A 217-amino-acid polypeptide reads, in one-letter code: GrpE protein homolog 1, mitochondrial (217 aa).

The N-terminal 27 residues, 1 to 27 (MAARCVRLARRSLPALALSFRPSPRLL), are a transit peptide targeting the mitochondrion. An N6-acetyllysine; alternate modification is found at Lys94. Lys94 carries the post-translational modification N6-succinyllysine; alternate. The residue at position 100 (Lys100) is an N6-acetyllysine. Lys120 carries the post-translational modification N6-succinyllysine. Lys215 bears the N6-acetyllysine; alternate mark. Lys215 is modified (N6-succinyllysine; alternate).

This sequence belongs to the GrpE family. In terms of assembly, probable component of the PAM complex at least composed of a mitochondrial HSP70 protein, GRPEL1 or GRPEL2, TIMM44, TIMM16/PAM16 and TIMM14/DNAJC19. Binds to HSP70, HSC70 and HSJ1B. As to expression, ubiquitous. Particularly abundant in heart, kidney and liver.

The protein resides in the mitochondrion matrix. Functionally, essential component of the PAM complex, a complex required for the translocation of transit peptide-containing proteins from the inner membrane into the mitochondrial matrix in an ATP-dependent manner. Seems to control the nucleotide-dependent binding of mitochondrial HSP70 to substrate proteins. The chain is GrpE protein homolog 1, mitochondrial (Grpel1) from Rattus norvegicus (Rat).